Here is a 198-residue protein sequence, read N- to C-terminus: MIIGYARKSTHLQDVTHQVDELTKAGCEQIYHEQISRGGSKRAKNGAPELENCLKALREGDTLVVWALDRLGGSLSQVITLLDDLKKRGITFIAIKDRIDTSAPVIGEIYTHLMAIFSNFERNRNIERTRSGLAAARARGRVGGRKPSLSEDDINEMKILLADPEMTVGAVAKRFNVSRMTIYRYTTKGNHSEKINDE.

The Resolvase/invertase-type recombinase catalytic domain occupies 1 to 140; that stretch reads MIIGYARKST…SGLAAARARG (140 aa). The active-site O-(5'-phospho-DNA)-serine intermediate is the Ser9. The segment at residues 168–187 is a DNA-binding region (H-T-H motif); sequence VGAVAKRFNVSRMTIYRYTT.

The protein belongs to the site-specific recombinase resolvase family.

Its function is as follows. Cooperates with the mucAB genes in the DNA repair process. Could be a resolvase-invertase protein. The chain is Protein uvp1 (uvp1) from Escherichia coli.